We begin with the raw amino-acid sequence, 393 residues long: Cysteine protease ATG4B (393 aa).

Met-1 carries the N-acetylmethionine modification. The residue at position 34 (Ser-34) is a Phosphoserine; by PKB/AKT1 and PKB/AKT2. Cys-74 serves as the catalytic Nucleophile. Cys-189 is subject to S-nitrosocysteine. Residues Asp-278 and His-280 contribute to the active site. An S-nitrosocysteine mark is found at Cys-292 and Cys-301. Cys-292 and Cys-361 are oxidised to a cystine. Position 316 is a phosphoserine; by ULK1 (Ser-316). Position 383 is a phosphoserine; by STK26 (Ser-383). Positions 388-391 (FEIL) match the LIR motif. The residue at position 392 (Ser-392) is a Phosphoserine.

The protein belongs to the peptidase C54 family. Interacts with PFKP; promoting phosphorylation of ATG4B at Ser-34. Interacts with GBP7. Post-translationally, phosphorylation at Ser-383 and Ser-392 promotes autophagy by increasing protein delipidation activity without affecting proteolytic activation of ATG8 proteins. Phosphorylation at Ser-316 by ULK1 inhibits autophagy by decreasing both proteolytic activation and delipidation activities. Phosphorylation at Ser-316 is dephosphorylated by protein phosphatase 2A (PP2A). Phosphorylation at Ser-34 by AKT2 promotes its hydrolase activity, leading to increased proteolytic activation and delipidation of ATG8 family proteins. Phosphorylation at Ser-34 by AKT1 promotes mitochondrial localization and inhibition of the F1F0-ATP synthase activity, leading to elevation of mitochondrial reactive oxygen species (ROS). In terms of processing, ubiquitinated by RNF5, leading to its degradation by the proteasome. S-nitrosylation at Cys-189 and Cys-292 in response to high glucose decreases both proteolytic activation and delipidation activities. Post-translationally, O-glycosylated by OGT, leading to increase protease activity, thereby promoting the proteolytic activation of ATG8 family proteins. In terms of processing, forms reversible intrachain disulfide bonds in response to oxidative stress. Forms interchain disulfide bonds, leading to formation of homooligomers in response to oxidation.

The protein localises to the cytoplasm. It localises to the cytosol. Its subcellular location is the cytoplasmic vesicle. The protein resides in the autophagosome. It is found in the endoplasmic reticulum. The protein localises to the mitochondrion. The enzyme catalyses [protein]-C-terminal L-amino acid-glycyl-phosphatidylethanolamide + H2O = [protein]-C-terminal L-amino acid-glycine + a 1,2-diacyl-sn-glycero-3-phosphoethanolamine. It catalyses the reaction [protein]-C-terminal L-amino acid-glycyl-phosphatidylserine + H2O = [protein]-C-terminal L-amino acid-glycine + a 1,2-diacyl-sn-glycero-3-phospho-L-serine. Its activity is regulated as follows. Inhibited by N-ethylmaleimide. Redox-regulated during autophagy since reducing conditions activate ATG4A whereas an oxidizing environment such as the presence of H(2)O(2) inhibits its activity. The cysteine protease activity compounds is inhibited by styrylquinoline compounds 4-28 and LV-320. Its function is as follows. Cysteine protease that plays a key role in autophagy by mediating both proteolytic activation and delipidation of ATG8 family proteins. Required for canonical autophagy (macroautophagy), non-canonical autophagy as well as for mitophagy. The protease activity is required for proteolytic activation of ATG8 family proteins: cleaves the C-terminal amino acid of ATG8 proteins MAP1LC3A, MAP1LC3B, MAP1LC3C, GABARAPL1, GABARAPL2 and GABARAP, to reveal a C-terminal glycine. Exposure of the glycine at the C-terminus is essential for ATG8 proteins conjugation to phosphatidylethanolamine (PE) and insertion to membranes, which is necessary for autophagy. Protease activity is also required to counteract formation of high-molecular weight conjugates of ATG8 proteins (ATG8ylation): acts as a deubiquitinating-like enzyme that removes ATG8 conjugated to other proteins, such as ATG3. In addition to the protease activity, also mediates delipidation of ATG8 family proteins. Catalyzes delipidation of PE-conjugated forms of ATG8 proteins during macroautophagy. Also involved in non-canonical autophagy, a parallel pathway involving conjugation of ATG8 proteins to single membranes at endolysosomal compartments, by catalyzing delipidation of ATG8 proteins conjugated to phosphatidylserine (PS). Compared to other members of the family (ATG4A, ATG4C or ATG4C), constitutes the major protein for proteolytic activation of ATG8 proteins, while it displays weaker delipidation activity than other ATG4 paralogs. Involved in phagophore growth during mitophagy independently of its protease activity and of ATG8 proteins: acts by regulating ATG9A trafficking to mitochondria and promoting phagophore-endoplasmic reticulum contacts during the lipid transfer phase of mitophagy. This is Cysteine protease ATG4B from Homo sapiens (Human).